The primary structure comprises 30 residues: Photosystem I reaction center subunit XII (30 aa).

The chain crosses the membrane as a helical span at residues 7 to 26 (IFVALLFALVSAVLAIRLGK).

This sequence belongs to the PsaM family.

Its subcellular location is the plastid. The protein resides in the chloroplast thylakoid membrane. The chain is Photosystem I reaction center subunit XII from Porphyra purpurea (Red seaweed).